The sequence spans 448 residues: Alginate biosynthesis transcriptional regulatory protein AlgB (448 aa).

The region spanning 10–124 (RILLVDDESA…QLRLATAKQL (115 aa)) is the Response regulatory domain. Position 59 is a 4-aspartylphosphate (Asp-59). Residues 147–376 (LDSHSPSMMA…LRNVIERASI (230 aa)) enclose the Sigma-54 factor interaction domain. ATP contacts are provided by residues 175–182 (GESGTGKG) and 238–247 (ADGGTLFLDE). A DNA-binding region (H-T-H motif) is located at residues 425–444 (LDQAAKTLGIDASTLYRKRK).

It functions in the pathway glycan biosynthesis; alginate biosynthesis [regulation]. Positive regulator of the alginate biosynthetic gene algD. This is Alginate biosynthesis transcriptional regulatory protein AlgB (algB) from Pseudomonas syringae pv. tomato (strain ATCC BAA-871 / DC3000).